Here is a 220-residue protein sequence, read N- to C-terminus: Protein-methionine-sulfoxide reductase heme-binding subunit MsrQ (220 aa).

The next 6 helical transmembrane spans lie at 20–40 (LWLL…LGAT), 52–72 (EHLL…VTPI), 86–106 (ALGL…MVLD), 122–142 (PFIT…LTSN), 153–173 (WSSL…HFLM), and 175–195 (VKSW…LLLW).

The protein belongs to the MsrQ family. Heterodimer of a catalytic subunit (MsrP) and a heme-binding subunit (MsrQ). FMN is required as a cofactor. Heme b serves as cofactor.

The protein localises to the cell inner membrane. Its function is as follows. Part of the MsrPQ system that repairs oxidized periplasmic proteins containing methionine sulfoxide residues (Met-O), using respiratory chain electrons. Thus protects these proteins from oxidative-stress damage caused by reactive species of oxygen and chlorine generated by the host defense mechanisms. MsrPQ is essential for the maintenance of envelope integrity under bleach stress, rescuing a wide series of structurally unrelated periplasmic proteins from methionine oxidation. MsrQ provides electrons for reduction to the reductase catalytic subunit MsrP, using the quinone pool of the respiratory chain. The sequence is that of Protein-methionine-sulfoxide reductase heme-binding subunit MsrQ from Brucella abortus (strain S19).